Reading from the N-terminus, the 498-residue chain is Germ cell-less protein-like 2 (498 aa).

A Nuclear localization signal motif is present at residues S33 to N39. Residues S90–T160 form the BTB domain.

As to quaternary structure, interacts with CUL3.

The protein localises to the nucleus matrix. Its pathway is protein modification; protein ubiquitination. Functionally, possible function in spermatogenesis. Probable substrate-specific adapter of an E3 ubiquitin-protein ligase complex which mediates the ubiquitination and subsequent proteasomal degradation of target proteins. This is Germ cell-less protein-like 2 (Gmcl2) from Mus musculus (Mouse).